The chain runs to 348 residues: Sulfate/thiosulfate import ATP-binding protein CysA (348 aa).

The region spanning 3-237 (IRIQELCKQF…PSSPFVYSFV (235 aa)) is the ABC transporter domain. 35–42 (GPSGSGKT) is a binding site for ATP.

Belongs to the ABC transporter superfamily. Sulfate/tungstate importer (TC 3.A.1.6) family. As to quaternary structure, the complex is composed of two ATP-binding proteins (CysA), two transmembrane proteins (CysT and CysW) and a solute-binding protein (CysP).

Its subcellular location is the cell inner membrane. It carries out the reaction sulfate(out) + ATP + H2O = sulfate(in) + ADP + phosphate + H(+). The enzyme catalyses thiosulfate(out) + ATP + H2O = thiosulfate(in) + ADP + phosphate + H(+). In terms of biological role, part of the ABC transporter complex CysAWTP involved in sulfate/thiosulfate import. Responsible for energy coupling to the transport system. The polypeptide is Sulfate/thiosulfate import ATP-binding protein CysA (Xylella fastidiosa (strain 9a5c)).